An 855-amino-acid chain; its full sequence is E3 ubiquitin-protein ligase TRIM71 (855 aa).

A2 carries the post-translational modification N-acetylalanine. An RING-type zinc finger spans residues C12–D94. The segment covering S26–S42 has biased composition (low complexity). Disordered stretches follow at residues S26–P48 and A126–S177. A compositionally biased stretch (gly residues) spans R135 to G145. Basic residues predominate over residues S147–A157. The segment at R181–G228 adopts a B box-type 1; atypical zinc-finger fold. The segment at E260–L301 adopts a B box-type 2 zinc-finger fold. The Zn(2+) site is built by C265, H268, C288, and H293. A coiled-coil region spans residues Q378–A414. Residues S466–V567 form a Filamin repeat. 6 NHL repeats span residues V580 to C623, H627 to E670, L674 to D717, L721 to D764, A768 to N811, and L815 to F855.

This sequence belongs to the TRIM/RBCC family. As to quaternary structure, interacts (via NHL repeats) with AGO2; the interaction increases in presence of RNA. Interacts with HSP90AA1. Interacts (via NHL repeats) with MOV10, PABPC1, PUM1, PUM2, STAU2, XRN1 and XRN2 in an RNA-dependent manner. Interacts with SHCBP1; leading to enhance its stability. In terms of processing, autoubiquitinated.

The protein resides in the cytoplasm. It localises to the P-body. The catalysed reaction is S-ubiquitinyl-[E2 ubiquitin-conjugating enzyme]-L-cysteine + [acceptor protein]-L-lysine = [E2 ubiquitin-conjugating enzyme]-L-cysteine + N(6)-ubiquitinyl-[acceptor protein]-L-lysine.. The protein operates within protein modification; protein ubiquitination. Its function is as follows. E3 ubiquitin-protein ligase that cooperates with the microRNAs (miRNAs) machinery and promotes embryonic stem cells proliferation and maintenance. Binds to miRNAs and associates with AGO2, participating in post-transcriptional repression of transcripts such as CDKN1A. In addition, participates in post-transcriptional mRNA repression in a miRNA independent mechanism. Facilitates the G1-S transition to promote rapid embryonic stem cell self-renewal by repressing CDKN1A expression. Required to maintain proliferation and prevent premature differentiation of neural progenitor cells during early neural development: positively regulates FGF signaling by controlling the stability of SHCBP1. Specific regulator of miRNA biogenesis. Binds to miRNA MIR29A hairpin and postranscriptionally modulates MIR29A levels, which indirectly regulates TET proteins expression. This chain is E3 ubiquitin-protein ligase TRIM71 (Trim71), found in Rattus norvegicus (Rat).